Reading from the N-terminus, the 458-residue chain is tRNA modification GTPase MnmE (458 aa).

Residues arginine 26, glutamate 88, and arginine 127 each contribute to the (6S)-5-formyl-5,6,7,8-tetrahydrofolate site. One can recognise a TrmE-type G domain in the interval 224–378 (GLSTAIIGRP…IEDRINQLFF (155 aa)). Residue asparagine 234 coordinates K(+). GTP contacts are provided by residues 234-239 (NVGKSS), 253-259 (TDIAGTT), and 278-281 (DTAG). Serine 238 is a Mg(2+) binding site. K(+) contacts are provided by threonine 253, isoleucine 255, and threonine 258. Threonine 259 is a Mg(2+) binding site. Residue lysine 458 participates in (6S)-5-formyl-5,6,7,8-tetrahydrofolate binding.

It belongs to the TRAFAC class TrmE-Era-EngA-EngB-Septin-like GTPase superfamily. TrmE GTPase family. Homodimer. Heterotetramer of two MnmE and two MnmG subunits. The cofactor is K(+).

The protein resides in the cytoplasm. Its function is as follows. Exhibits a very high intrinsic GTPase hydrolysis rate. Involved in the addition of a carboxymethylaminomethyl (cmnm) group at the wobble position (U34) of certain tRNAs, forming tRNA-cmnm(5)s(2)U34. The protein is tRNA modification GTPase MnmE of Streptococcus pyogenes serotype M18 (strain MGAS8232).